A 760-amino-acid chain; its full sequence is Xaa-Pro dipeptidyl-peptidase (760 aa).

Residues Ser349, Asp469, and His499 each act as charge relay system in the active site.

It belongs to the peptidase S15 family. In terms of assembly, homodimer.

Its subcellular location is the cytoplasm. It carries out the reaction Hydrolyzes Xaa-Pro-|- bonds to release unblocked, N-terminal dipeptides from substrates including Ala-Pro-|-p-nitroanilide and (sequentially) Tyr-Pro-|-Phe-Pro-|-Gly-Pro-|-Ile.. Removes N-terminal dipeptides sequentially from polypeptides having unsubstituted N-termini provided that the penultimate residue is proline. The polypeptide is Xaa-Pro dipeptidyl-peptidase (Streptococcus pyogenes serotype M3 (strain ATCC BAA-595 / MGAS315)).